Here is a 365-residue protein sequence, read N- to C-terminus: Probable G-protein coupled receptor 142 (365 aa).

The Extracellular portion of the chain corresponds to 1-66; sequence MHLNSNPNSY…WPESPERSPC (66 aa). N-linked (GlcNAc...) asparagine glycosylation occurs at Asn44. A helical transmembrane segment spans residues 67-87; sequence VAGIIPVIYYSVLLSLGLPVA. Residues 88–102 are Cytoplasmic-facing; it reads LARLAARTRKPSYHY. Residues 103–123 form a helical membrane-spanning segment; the sequence is LLALTASDIVTQVIIVFVGFL. Residues 124–140 lie on the Extracellular side of the membrane; the sequence is LQGAVLARQVPQAVVRT. Residues 141-161 traverse the membrane as a helical segment; the sequence is ANILEFAANHASVWIAVLFTV. Topologically, residues 162–185 are cytoplasmic; sequence DRYNALCRPLRHRATSSPGRTHRA. The chain crosses the membrane as a helical span at residues 186–206; the sequence is IAAVIGVTLLTGIPFYWWLDV. Residues 207–224 lie on the Extracellular side of the membrane; it reads WRDADPPSTMDKLLKWAH. The helical transmembrane segment at 225–245 threads the bilayer; the sequence is CLIVYFIPCNVFLVTNSAIIL. Residues 246-264 lie on the Cytoplasmic side of the membrane; sequence RLRKRGQRGLRPLVSKSTA. Residues 265 to 285 traverse the membrane as a helical segment; sequence ILLGVTSLFALLWAPRIIVML. At 286 to 304 the chain is on the extracellular side; the sequence is YHLYVAPVHRDWRVHLALD. A helical transmembrane segment spans residues 305 to 325; it reads IANMLAMLNTEVNFGLYCFIS. The Cytoplasmic segment spans residues 326 to 365; it reads KTFRATVRQVICDVHMACALKSQPKQTVVELMLKSVGTEL.

It belongs to the G-protein coupled receptor 1 family.

It localises to the cell membrane. Orphan receptor. The polypeptide is Probable G-protein coupled receptor 142 (Gpr142) (Mus musculus (Mouse)).